A 481-amino-acid polypeptide reads, in one-letter code: Inosine-5'-monophosphate dehydrogenase (481 aa).

CBS domains are found at residues 92 to 148 (VIND…SKKV) and 152 to 209 (MTKM…PEAN). NAD(+)-binding positions include Asp-244 and 293–295 (GIG). Positions 295 and 297 each coordinate K(+). Ser-298 is an IMP binding site. Cys-300 serves as a coordination point for K(+). The active-site Thioimidate intermediate is the Cys-300. Residues 333-335 (DGG), 356-357 (GS), and 380-384 (YRGMG) contribute to the IMP site. Residue Arg-396 is the Proton acceptor of the active site. Residue Glu-410 coordinates IMP. Residues Glu-464, Ser-465, and His-466 each contribute to the K(+) site.

Belongs to the IMPDH/GMPR family. In terms of assembly, homotetramer. The cofactor is K(+).

It catalyses the reaction IMP + NAD(+) + H2O = XMP + NADH + H(+). It functions in the pathway purine metabolism; XMP biosynthesis via de novo pathway; XMP from IMP: step 1/1. Its activity is regulated as follows. Mycophenolic acid (MPA) is a non-competitive inhibitor that prevents formation of the closed enzyme conformation by binding to the same site as the amobile flap. In contrast, mizoribine monophosphate (MZP) is a competitive inhibitor that induces the closed conformation. MPA is a potent inhibitor of mammalian IMPDHs but a poor inhibitor of the bacterial enzymes. MZP is a more potent inhibitor of bacterial IMPDH. Catalyzes the conversion of inosine 5'-phosphate (IMP) to xanthosine 5'-phosphate (XMP), the first committed and rate-limiting step in the de novo synthesis of guanine nucleotides, and therefore plays an important role in the regulation of cell growth. The chain is Inosine-5'-monophosphate dehydrogenase from Helicobacter pylori (strain ATCC 700392 / 26695) (Campylobacter pylori).